The sequence spans 583 residues: Estrogen receptor (583 aa).

The modulating stretch occupies residues 1 to 138 (MYPEESRGSG…GFEITKNTRF (138 aa)). 2 NR C4-type zinc fingers span residues 139–159 (CAVC…CEGC) and 175–199 (CPAT…LRKC). A DNA-binding region (nuclear receptor) is located at residues 139–204 (CAVCSDYASG…RLRKCYEVGM (66 aa)). Residues 205-265 (MKGGMRKDRG…PGGRSSLNNM (61 aa)) are hinge. The segment at 220–263 (EKHGPAQRQTSQNLPTHKASPQDGRKRAMSSSSTSGPGGRSSLN) is disordered. Residues 266–501 (PPDQVLLLLQ…DLLLEMLDAH (236 aa)) enclose the NR LBD domain. The segment at 506–583 (PVKPSQSWSQ…GSHSDCTRIP (78 aa)) is disordered. The span at 539–551 (ASSAGSSSGPQGS) shows a compositional bias: low complexity.

Belongs to the nuclear hormone receptor family. NR3 subfamily. As to quaternary structure, binds DNA as a homodimer. Can form a heterodimer with ER-beta.

Its subcellular location is the nucleus. Its function is as follows. The steroid hormones and their receptors are involved in the regulation of eukaryotic gene expression and affect cellular proliferation and differentiation in target tissues. The protein is Estrogen receptor (esr1) of Oreochromis aureus (Israeli tilapia).